The sequence spans 3471 residues: Genome polyprotein (3471 aa).

The stretch at 513–603 (EVQDALEKSM…RADIDALKKK (91 aa)) forms a coiled coil. Disordered stretches follow at residues 603–639 (KPAQ…EMSE) and 1271–1307 (NKTT…ARTS). Polar residues-rich tracts occupy residues 606–621 (QSVT…SGTA) and 1271–1291 (NKTT…TSTV). 2 helical membrane passes run 1493 to 1513 (DKWI…LHYY) and 1592 to 1612 (MSSL…GKIP). One can recognise an SF3 helicase domain in the interval 1748-1914 (LELMNESYTY…PDVPKNEANP (167 aa)). 1774-1781 (GAPGVGKS) contacts ATP. Residues 2360–2380 (ILLAIGASVAVAGVAVGAVIL) form a helical membrane-spanning segment. Residues 2391-2401 (EDEEIEGEEGE) show a composition bias toward acidic residues. Disordered regions lie at residues 2391-2411 (EDEE…HESD) and 2435-2460 (VAEA…NFLG). A compositionally biased stretch (basic and acidic residues) spans 2435–2448 (VAEAHEEKSTEKPR). In terms of domain architecture, Peptidase C3 spans 2629–2847 (GVDRDLSMTN…YAETLTQEHL (219 aa)). Residues histidine 2677, glutamate 2714, and cysteine 2808 each act as for picornain 3C-like protease activity in the active site. The 132-residue stretch at 3152-3283 (TKGFAGDYSK…SVHEEFLDVY (132 aa)) folds into the RdRp catalytic domain.

Specific enzymatic cleavages by picornain 3C-like protease in vivo yield mature proteins. Picornain 3C-like protease is autocatalytically processed.

The protein resides in the virion. Its subcellular location is the host membrane. It carries out the reaction RNA(n) + a ribonucleoside 5'-triphosphate = RNA(n+1) + diphosphate. Its function is as follows. Picornain 3C-like protease is a thiol protease that probably cleaves the polyprotein. This is Genome polyprotein from Oryza sativa (Rice).